The sequence spans 181 residues: uncharacterized protein (181 aa).

The protein belongs to the M.jannaschii MJ0150/MJ0739/MJ0745/MJ1460/MJ1642 family.

This is an uncharacterized protein from Methanocaldococcus jannaschii (strain ATCC 43067 / DSM 2661 / JAL-1 / JCM 10045 / NBRC 100440) (Methanococcus jannaschii).